A 462-amino-acid polypeptide reads, in one-letter code: UDP-N-acetylmuramoylalanine--D-glutamate ligase (462 aa).

112–118 contributes to the ATP binding site; the sequence is GTNGKTT.

It belongs to the MurCDEF family.

The protein localises to the cytoplasm. The enzyme catalyses UDP-N-acetyl-alpha-D-muramoyl-L-alanine + D-glutamate + ATP = UDP-N-acetyl-alpha-D-muramoyl-L-alanyl-D-glutamate + ADP + phosphate + H(+). The protein operates within cell wall biogenesis; peptidoglycan biosynthesis. Cell wall formation. Catalyzes the addition of glutamate to the nucleotide precursor UDP-N-acetylmuramoyl-L-alanine (UMA). The polypeptide is UDP-N-acetylmuramoylalanine--D-glutamate ligase (Nostoc sp. (strain PCC 7120 / SAG 25.82 / UTEX 2576)).